The following is a 546-amino-acid chain: Carboxypeptidase Y homolog A (546 aa).

The signal sequence occupies residues 1–17 (MKLLASTVLVGAAAASI). The propeptide occupies 18 to 132 (TPQQQVLQNP…KLEQYNLRAK (115 aa)). 5 disulfides stabilise this stretch: C186–C426, C320–C334, C344–C367, C351–C360, and C389–C396. N-linked (GlcNAc...) asparagine glycosylation occurs at N217. S273 is an active-site residue. The active site involves D465. N512 is a glycosylation site (N-linked (GlcNAc...) asparagine). Residue H523 is part of the active site.

Belongs to the peptidase S10 family.

The protein localises to the vacuole. The catalysed reaction is Release of a C-terminal amino acid with broad specificity.. Vacuolar carboxypeptidase involved in degradation of small peptides. Digests preferentially peptides containing an aliphatic or hydrophobic residue in P1' position, as well as methionine, leucine or phenylalanine in P1 position of ester substrate. This is Carboxypeptidase Y homolog A (CPYA) from Botryotinia fuckeliana (strain B05.10) (Noble rot fungus).